The following is a 1071-amino-acid chain: Ubiquitin carboxyl-terminal hydrolase 7 (1071 aa).

The segment at 467 to 532 (KARLQQEQQQ…MPTTPEIPPP (66 aa)) is disordered. Low complexity predominate over residues 471 to 480 (QQEQQQQQQQ). The segment covering 481 to 495 (PDSQDSFSAKESSTK) has biased composition (polar residues). Pro residues-rich tracts occupy residues 497–507 (PEPPSWKPPDL) and 516–532 (PPPP…IPPP). Residues 609 to 1069 (TGLRNLGNTC…DVYVLFYERV (461 aa)) enclose the USP domain. Residue Cys618 is the Nucleophile of the active site. A disordered region spans residues 913–942 (RMLGGSGKRSSSSTPFSTGGNDSNNSSDYK). The segment covering 920–932 (KRSSSSTPFSTGG) has biased composition (polar residues). The Proton acceptor role is filled by His1014.

This sequence belongs to the peptidase C19 family.

It is found in the cytoplasm. The enzyme catalyses Thiol-dependent hydrolysis of ester, thioester, amide, peptide and isopeptide bonds formed by the C-terminal Gly of ubiquitin (a 76-residue protein attached to proteins as an intracellular targeting signal).. Involved in the sorting of ubiquitinated cargo proteins at the multivesicular body (MVB). The chain is Ubiquitin carboxyl-terminal hydrolase 7 (UBP7) from Saccharomyces cerevisiae (strain ATCC 204508 / S288c) (Baker's yeast).